The sequence spans 501 residues: Cytochrome P450 71D6 (501 aa).

Cys442 lines the heme pocket.

It belongs to the cytochrome P450 family. Heme is required as a cofactor.

This chain is Cytochrome P450 71D6 (CYP71D6), found in Solanum chacoense (Chaco potato).